A 254-amino-acid polypeptide reads, in one-letter code: Transmembrane protein 70, mitochondrial (254 aa).

The N-terminal 78 residues, 1–78 (MLFLALGGPW…PVCWERGVRC (78 aa)), are a transit peptide targeting the mitochondrion. Residues 79–112 (SHTQLDKSEDGRLIYTGNLARTVFGVKCFSYSTS) are Mitochondrial matrix-facing. The chain crosses the membrane as a helical span at residues 113–133 (LISLAFLPYIFAQNNVIFGSL). Residues 134–136 (PLQ) lie on the Mitochondrial intermembrane side of the membrane. Residues 137-157 (ILFYGTIGSFTVITPALLHFL) form a helical membrane-spanning segment. Residues 158-254 (TKGYVIRLYH…SEKKQLKEEK (97 aa)) lie on the Mitochondrial matrix side of the membrane.

This sequence belongs to the TMEM70 family. In terms of assembly, homooligomer. Interacts (homooligomer form) with ATP5MC1; this interaction facilitates the oligomer formation of subunit c/ATP5MC1 (c-ring) and the c-ring membrane insertion and also protects ATP5MC1 against intramitochondrial proteolysis. Interacts with the core subunits TMEM126B, NDUFAF1, ECSIT and ACAD9 of the MCIA complex. Interacts with ATP5MC3, TMEM242 and TIMMDC1.

It is found in the mitochondrion inner membrane. Scaffold protein that participates in the c-ring assembly of mitochondrial ATP synthase (F(1)F(0) ATP synthase or complex V) by facilitating the membrane insertion and oligomer formation of the subunit c/ATP5MC1 through its interaction. Therefore, participates in the early stage of mitochondrial ATP synthase biogenesis and also protects subunit c/ATP5MC1 against intramitochondrial proteolysis. In addition, binds the mitochondrial proton-transporting ATP synthase complexes I and may play a role in the stability of its membrane-bound subassemblies. The polypeptide is Transmembrane protein 70, mitochondrial (Bos taurus (Bovine)).